Consider the following 203-residue polypeptide: Outer-membrane lipoprotein LolB (203 aa).

The N-terminal stretch at 1–22 (MPVNLNHTLLLCLLVAASLLSG) is a signal peptide. The N-palmitoyl cysteine moiety is linked to residue Cys-23. The S-diacylglycerol cysteine moiety is linked to residue Cys-23.

It belongs to the LolB family. As to quaternary structure, monomer.

The protein localises to the cell outer membrane. In terms of biological role, plays a critical role in the incorporation of lipoproteins in the outer membrane after they are released by the LolA protein. This is Outer-membrane lipoprotein LolB from Shewanella denitrificans (strain OS217 / ATCC BAA-1090 / DSM 15013).